The sequence spans 68 residues: Elastase inhibitor AFLEI (68 aa).

Cys-5 and Cys-67 are oxidised to a cystine.

Its subcellular location is the secreted. Functionally, elastase inhibitor. Inhibitor of A.flavus elastase with a Ki of 40 nM. Inhibitor of A.fumigatus elastase and human leukocyte elastase. Inhibits the fibrinogenase and collagenase activities of A.flavus elastase. Does not inhibit porcine pancreatic elastase, trypsin, chymotrypsin, thrombin or A.acutus AC1-proteinase. The polypeptide is Elastase inhibitor AFLEI (Aspergillus flavus).